The chain runs to 239 residues: MAINVIINGINGKMGRVVKENITAQSDLELVSGTGRQDDLAKTIQTTHADVVIDFTTPQSVFHNAEIIIQSGARPVIGTTGLTLEQIALLDKQCRNKKLGAIVAPNFSVGAVLMMKYAKEAAHYFPDVEIIEMHHSQKIDAPSGTAIKTAQMIGEMRSSKKDEPFKDRARGEIKNGIPIHSIRLPGLFSHQSVIFGSNGETLTIRHDGMDRNCTMPGIFMACRKVMELDYLVYGLENLL.

NAD(+) contacts are provided by residues 9–14, 78–80, and 104–107; these read GINGKM, GTT, and APNF. H134 functions as the Proton donor/acceptor in the catalytic mechanism. H135 provides a ligand contact to (S)-2,3,4,5-tetrahydrodipicolinate. K138 serves as the catalytic Proton donor. 144–145 contacts (S)-2,3,4,5-tetrahydrodipicolinate; sequence GT.

Belongs to the DapB family.

It is found in the cytoplasm. The enzyme catalyses (S)-2,3,4,5-tetrahydrodipicolinate + NAD(+) + H2O = (2S,4S)-4-hydroxy-2,3,4,5-tetrahydrodipicolinate + NADH + H(+). The catalysed reaction is (S)-2,3,4,5-tetrahydrodipicolinate + NADP(+) + H2O = (2S,4S)-4-hydroxy-2,3,4,5-tetrahydrodipicolinate + NADPH + H(+). Its pathway is amino-acid biosynthesis; L-lysine biosynthesis via DAP pathway; (S)-tetrahydrodipicolinate from L-aspartate: step 4/4. In terms of biological role, catalyzes the conversion of 4-hydroxy-tetrahydrodipicolinate (HTPA) to tetrahydrodipicolinate. This is 4-hydroxy-tetrahydrodipicolinate reductase from Coxiella burnetii (strain Dugway 5J108-111).